The primary structure comprises 305 residues: Acetaldehyde dehydrogenase (305 aa).

12–15 (SGNI) contacts NAD(+). C127 acts as the Acyl-thioester intermediate in catalysis. NAD(+) contacts are provided by residues 158–166 (SAGPGTRAN) and N277.

Belongs to the acetaldehyde dehydrogenase family.

It carries out the reaction acetaldehyde + NAD(+) + CoA = acetyl-CoA + NADH + H(+). In Mycolicibacterium paratuberculosis (strain ATCC BAA-968 / K-10) (Mycobacterium paratuberculosis), this protein is Acetaldehyde dehydrogenase.